The chain runs to 278 residues: MADS-box transcription factor PHERES 2 (278 aa).

The 60-residue stretch at 1–60 folds into the MADS-box domain; it reads MKRKMKLSLIENSVSRKTTFTKRKKGMTKKLTELVTLCGVEACAVVYSPFNSIPEAWPSR.

Interacts with AGL61/DIANA and AGL62. As to expression, male gametophyte, embryo and endosperm.

The protein localises to the nucleus. Its function is as follows. Probable transcription factor involved in the development of gametophytes and seeds. This Arabidopsis thaliana (Mouse-ear cress) protein is MADS-box transcription factor PHERES 2 (PHE2).